We begin with the raw amino-acid sequence, 284 residues long: 2-dehydro-3-deoxyphosphooctonate aldolase (284 aa).

It belongs to the KdsA family.

Its subcellular location is the cytoplasm. The catalysed reaction is D-arabinose 5-phosphate + phosphoenolpyruvate + H2O = 3-deoxy-alpha-D-manno-2-octulosonate-8-phosphate + phosphate. The protein operates within carbohydrate biosynthesis; 3-deoxy-D-manno-octulosonate biosynthesis; 3-deoxy-D-manno-octulosonate from D-ribulose 5-phosphate: step 2/3. It functions in the pathway bacterial outer membrane biogenesis; lipopolysaccharide biosynthesis. The sequence is that of 2-dehydro-3-deoxyphosphooctonate aldolase from Burkholderia vietnamiensis (strain G4 / LMG 22486) (Burkholderia cepacia (strain R1808)).